A 378-amino-acid chain; its full sequence is MAFRTPAVQLHLKACVLLLLGGLLEAAYQERGTMYMWIDANQARILIGFEEDILIVSEGKMAPFTHDFRKAQQRMPAIPVNIHHVNFTWQATDQAEYFYEFQTLRSLDKDIMDDPTVNVPLLGSVPHKASVVQVGFPCRGDQDGVAAFEVTILVMDAGGNIILRTPHNAIFFKTCQRAKCPGGCRNGGYCNERQVCECQDGFYGVHCEKALCSPRCLNGGLCMSPGVCICPPGYFGSSCERANCSTTCLNGGTCFHPGKCICAVSFEGVRCELSKCRQPCRNGGKCTGRNKCKCSKGYHGDLCSKAVCEPSCGAHGTCVEPNRCQCREGWHGRHCNKRFRGGVSNSQRVSPSKHKSPSVAAAKEAPETSQPSETNYVV.

Positions 1–28 (MAFRTPAVQLHLKACVLLLLGGLLEAAY) are cleaved as a signal peptide. The WIF domain maps to 36–175 (MWIDANQARI…PHNAIFFKTC (140 aa)). N86 carries N-linked (GlcNAc...) asparagine glycosylation. Disulfide bonds link C138/C175, C180/C190, C184/C196, C212/C222, C216/C228, and C230/C239. EGF-like domains are found at residues 176–205 (QRAKCPGGCRNGGYCNERQVCECQDGFYGV), 208–240 (EKALCSPRCLNGGLCMSPGVCICPPGYFGSSCE), 243–272 (NCSTTCLNGGTCFHPGKCICAVSFEGVRCE), 272–304 (ELSKCRQPCRNGGKCTGRNKCKCSKGYHGDLCS), and 305–336 (KAVCEPSCGAHGTCVEPNRCQCREGWHGRHCN). N243 is a glycosylation site (N-linked (GlcNAc...) asparagine). 9 disulfides stabilise this stretch: C244/C254, C248/C260, C262/C271, C276/C286, C280/C292, C294/C303, C308/C318, C312/C324, and C326/C335. The tract at residues 343 to 378 (VSNSQRVSPSKHKSPSVAAAKEAPETSQPSETNYVV) is disordered. Residues 367–378 (ETSQPSETNYVV) are compositionally biased toward polar residues.

As to expression, highly expressed in unsegmented paraxial mesoderm.

The protein localises to the secreted. Binds to WNT proteins and inhibits their activities. May be involved in mesoderm segmentation. The sequence is that of Wnt inhibitory factor 1 (wif1) from Danio rerio (Zebrafish).